The primary structure comprises 165 residues: Growth arrest and DNA damage-inducible protein GADD45 alpha (165 aa).

The residue at position 2 (Thr2) is a Phosphothreonine.

The protein belongs to the GADD45 family. As to quaternary structure, interacts with AURKA, PCNA, GADD45GIP1 and MAPK14.

Its subcellular location is the nucleus. Functionally, might affect PCNA interaction with some CDK (cell division protein kinase) complexes; stimulates DNA excision repair in vitro and inhibits entry of cells into S phase. In T-cells, functions as a regulator of p38 MAPKs by inhibiting p88 phosphorylation and activity. The polypeptide is Growth arrest and DNA damage-inducible protein GADD45 alpha (GADD45A) (Bos taurus (Bovine)).